A 263-amino-acid polypeptide reads, in one-letter code: Oxygen-evolving enhancer protein 2, chloroplastic (263 aa).

Residues 1–78 (MAAASCFHAL…VGTKVSPADA (78 aa)) constitute a chloroplast transit peptide. The segment covering 14-30 (ARSSSSSLQSSSSRLPA) has biased composition (low complexity). A disordered region spans residues 14–34 (ARSSSSSLQSSSSRLPAPIKP).

Belongs to the PsbP family.

The protein resides in the plastid. Its subcellular location is the chloroplast thylakoid membrane. May be involved in the regulation of photosystem II. This is Oxygen-evolving enhancer protein 2, chloroplastic from Helianthus annuus (Common sunflower).